Here is a 1399-residue protein sequence, read N- to C-terminus: DNA-directed RNA polymerase subunit beta' (1399 aa).

Zn(2+) contacts are provided by C71, C73, C86, and C89. Positions 462, 464, and 466 each coordinate Mg(2+). Positions 810, 884, 891, and 894 each coordinate Zn(2+). Residues 1379–1399 (KQAAIVPSQPEPQPLALPPAE) form a disordered region. Over residues 1387–1399 (QPEPQPLALPPAE) the composition is skewed to pro residues.

The protein belongs to the RNA polymerase beta' chain family. In terms of assembly, the RNAP catalytic core consists of 2 alpha, 1 beta, 1 beta' and 1 omega subunit. When a sigma factor is associated with the core the holoenzyme is formed, which can initiate transcription. The cofactor is Mg(2+). Zn(2+) is required as a cofactor.

It catalyses the reaction RNA(n) + a ribonucleoside 5'-triphosphate = RNA(n+1) + diphosphate. In terms of biological role, DNA-dependent RNA polymerase catalyzes the transcription of DNA into RNA using the four ribonucleoside triphosphates as substrates. The protein is DNA-directed RNA polymerase subunit beta' of Bradyrhizobium sp. (strain BTAi1 / ATCC BAA-1182).